Consider the following 180-residue polypeptide: Cytokinin-beta-glucosidase 4 (180 aa).

Hydrolyzes cytokinin glucosides thus liberating free cytokinins. This chain is Cytokinin-beta-glucosidase 4 (ROLC4), found in Panax ginseng (Korean ginseng).